The sequence spans 401 residues: Probable acid ceramidase (401 aa).

The signal sequence occupies residues 1 to 22; that stretch reads MKPVAISLSLLLLVTLLPGSEQ. N-linked (GlcNAc...) asparagine glycans are attached at residues Asn-101, Asn-303, and Asn-371.

It belongs to the acid ceramidase family.

It catalyses the reaction an N-acyl-sphingoid base + H2O = a sphingoid base + a fatty acid. The enzyme catalyses an N-acylsphing-4-enine + H2O = sphing-4-enine + a fatty acid. It carries out the reaction an N-acyl-15-methylhexadecasphing-4-enine + H2O = 15-methylhexadecasphing-4-enine + a fatty acid. Functionally, catalyzes the hydrolysis of ceramides into sphingoid base and free fatty acid. C.elegans contain specific sphingoid bases, which are unique or different in structure compared to the sphingoid bases found in other animals. Two examples of these distinctive compounds are: 15-methylhexadecasphinganine and 15-methylhexadecasphing-4-enine. The chain is Probable acid ceramidase from Caenorhabditis elegans.